Here is a 223-residue protein sequence, read N- to C-terminus: Translation initiation factor 6 (223 aa).

Belongs to the eIF-6 family.

Functionally, binds to the 50S ribosomal subunit and prevents its association with the 30S ribosomal subunit to form the 70S initiation complex. The chain is Translation initiation factor 6 from Methanobrevibacter smithii (strain ATCC 35061 / DSM 861 / OCM 144 / PS).